Here is a 609-residue protein sequence, read N- to C-terminus: Aspartate--tRNA(Asp/Asn) ligase (609 aa).

L-aspartate is bound at residue Glu175. Residues 199–202 form an aspartate region; it reads QQFK. Residues Arg221 and His468 each contribute to the L-aspartate site. ATP is bound at residue 221-223; it reads RDE. Residue Glu502 coordinates ATP. Position 509 (Arg509) interacts with L-aspartate. 554–557 serves as a coordination point for ATP; sequence GIDR.

This sequence belongs to the class-II aminoacyl-tRNA synthetase family. Type 1 subfamily. Homodimer.

It is found in the cytoplasm. The catalysed reaction is tRNA(Asx) + L-aspartate + ATP = L-aspartyl-tRNA(Asx) + AMP + diphosphate. Functionally, aspartyl-tRNA synthetase with relaxed tRNA specificity since it is able to aspartylate not only its cognate tRNA(Asp) but also tRNA(Asn). Reaction proceeds in two steps: L-aspartate is first activated by ATP to form Asp-AMP and then transferred to the acceptor end of tRNA(Asp/Asn). The sequence is that of Aspartate--tRNA(Asp/Asn) ligase from Caulobacter sp. (strain K31).